The chain runs to 293 residues: Eukaryotic translation initiation factor 3 subunit G (293 aa).

2 disordered regions span residues 1–32 and 163–206; these read MPSI…PKET and STGE…QPNR. Over residues 194–206 the composition is skewed to basic and acidic residues; it reads GGTRRGESMQPNR. The region spanning 212-290 is the RRM domain; it reads ATIRVTNLSE…LILNVEWAKP (79 aa).

This sequence belongs to the eIF-3 subunit G family. Component of the eukaryotic translation initiation factor 3 (eIF-3) complex, which is composed of 13 subunits: eif3a, eif3b, eif3c, eif3d, eif3e, eif3f, eif3g, eif3h, eif3i, eif3j, eif3k, eif3l and eif3m.

The protein resides in the cytoplasm. RNA-binding component of the eukaryotic translation initiation factor 3 (eIF-3) complex, which is involved in protein synthesis of a specialized repertoire of mRNAs and, together with other initiation factors, stimulates binding of mRNA and methionyl-tRNAi to the 40S ribosome. The eIF-3 complex specifically targets and initiates translation of a subset of mRNAs involved in cell proliferation. This subunit can bind 18S rRNA. The polypeptide is Eukaryotic translation initiation factor 3 subunit G (eif3g) (Danio rerio (Zebrafish)).